The primary structure comprises 159 residues: MHFDWSDFIWTLINFFVLLFILKILLYKPVLKTIEDRKKSIEESLEKAAKAQEEAERIKAEYDGMIAKAREEAREIIAKAQKTAQAEKEEIIATAQREAQSLLADAKATIAQEKEKALRELRQEIGNLAVLAAGKILNRAVTLEDHQKLVDEFLNEVKM.

The helical transmembrane segment at 7–27 threads the bilayer; it reads DFIWTLINFFVLLFILKILLY.

Belongs to the ATPase B chain family. In terms of assembly, F-type ATPases have 2 components, F(1) - the catalytic core - and F(0) - the membrane proton channel. F(1) has five subunits: alpha(3), beta(3), gamma(1), delta(1), epsilon(1). F(0) has three main subunits: a(1), b(2) and c(10-14). The alpha and beta chains form an alternating ring which encloses part of the gamma chain. F(1) is attached to F(0) by a central stalk formed by the gamma and epsilon chains, while a peripheral stalk is formed by the delta and b chains.

It is found in the cell membrane. Its function is as follows. F(1)F(0) ATP synthase produces ATP from ADP in the presence of a proton or sodium gradient. F-type ATPases consist of two structural domains, F(1) containing the extramembraneous catalytic core and F(0) containing the membrane proton channel, linked together by a central stalk and a peripheral stalk. During catalysis, ATP synthesis in the catalytic domain of F(1) is coupled via a rotary mechanism of the central stalk subunits to proton translocation. In terms of biological role, component of the F(0) channel, it forms part of the peripheral stalk, linking F(1) to F(0). The chain is ATP synthase subunit b from Carboxydothermus hydrogenoformans (strain ATCC BAA-161 / DSM 6008 / Z-2901).